The chain runs to 135 residues: Sex-regulated protein janus-A (135 aa).

Lys-37 is a binding site for substrate. His-63 (proton acceptor) is an active-site residue. 104-106 serves as a coordination point for substrate; it reads SQG.

It belongs to the janus family.

JanA and janB regulate somatic sex differentiation. The polypeptide is Sex-regulated protein janus-A (janA) (Drosophila simulans (Fruit fly)).